A 57-amino-acid polypeptide reads, in one-letter code: Ribosome modulation factor 1 (57 aa).

Over residues 1–14 the composition is skewed to basic residues; that stretch reads MKRQKRDRQSRAHT. The segment at 1 to 24 is disordered; the sequence is MKRQKRDRQSRAHTRGYQAGISGR.

It belongs to the ribosome modulation factor family.

It is found in the cytoplasm. During stationary phase, converts 70S ribosomes to an inactive dimeric form (100S ribosomes). This is Ribosome modulation factor 1 from Colwellia psychrerythraea (strain 34H / ATCC BAA-681) (Vibrio psychroerythus).